The following is a 164-amino-acid chain: MNPRRKSRLYLAIVVLIGVALTATLMLYALRSNIDLFYTPSEILQGKGENHEKPEVGQRLRIGGMVMPGSVKRDQKTLQVSFKVYDARGAIDVTYTGILPDLFREGQGVVAQGVLGEGNVVNAREVLAKHDEKYTPPEVADAMKENHKGPASAYATPQNEGAKS.

Topologically, residues 1–8 (MNPRRKSR) are cytoplasmic. Residues 9–29 (LYLAIVVLIGVALTATLMLYA) traverse the membrane as a helical; Signal-anchor for type II membrane protein segment. Over 30-164 (LRSNIDLFYT…ATPQNEGAKS (135 aa)) the chain is Periplasmic. Heme contacts are provided by His-130 and Tyr-134. Basic and acidic residues predominate over residues 131–148 (DEKYTPPEVADAMKENHK). Positions 131 to 164 (DEKYTPPEVADAMKENHKGPASAYATPQNEGAKS) are disordered. A compositionally biased stretch (polar residues) spans 155 to 164 (ATPQNEGAKS).

Belongs to the CcmE/CycJ family.

Its subcellular location is the cell inner membrane. Heme chaperone required for the biogenesis of c-type cytochromes. Transiently binds heme delivered by CcmC and transfers the heme to apo-cytochromes in a process facilitated by CcmF and CcmH. This is Cytochrome c-type biogenesis protein CcmE from Serratia proteamaculans (strain 568).